A 307-amino-acid chain; its full sequence is Metapyrocatechase (307 aa).

VOC domains follow at residues 7–122 and 150–269; these read RPGH…LYAD and RFDH…VFCG. Fe cation-binding residues include His153, His214, and Glu265.

The protein belongs to the extradiol ring-cleavage dioxygenase family. As to quaternary structure, homotetramer. The cofactor is Fe(2+).

The catalysed reaction is catechol + O2 = (2Z,4E)-2-hydroxy-6-oxohexa-2,4-dienoate + H(+). It functions in the pathway aromatic compound metabolism; benzoate degradation via hydroxylation. The polypeptide is Metapyrocatechase (dmpB) (Pseudomonas sp. (strain CF600)).